Reading from the N-terminus, the 665-residue chain is Cyclic nucleotide-gated cation channel subunit A (665 aa).

Topologically, residues Met-1–Trp-110 are cytoplasmic. The chain crosses the membrane as a helical span at residues Leu-111–Phe-131. Over Trp-132–Ala-138 the chain is Extracellular. The N-linked (GlcNAc...) asparagine glycan is linked to Asn-135. The chain crosses the membrane as a helical span at residues Pro-139–Val-159. The Cytoplasmic segment spans residues His-160 to Lys-186. Residues Gly-187–Pro-207 form a helical membrane-spanning segment. Over Glu-208–Lys-253 the chain is Extracellular. The chain crosses the membrane as a helical span at residues Val-254–Tyr-274. Residues Glu-275–Tyr-325 lie on the Cytoplasmic side of the membrane. A helical membrane pass occupies residues Leu-326–Ile-346. Topologically, residues Gly-347 to Gly-481 are extracellular. 3',5'-cyclic GMP is bound by residues Leu-437–Leu-559, Glu-496, and Arg-511. Residues Ile-482–Ile-502 traverse the membrane as a helical segment. The Cytoplasmic portion of the chain corresponds to Ala-503–Leu-665. The interval Arg-633–Leu-665 is disordered. Positions Ala-654–Leu-665 are enriched in polar residues.

Belongs to the cyclic nucleotide-gated cation channel (TC 1.A.1.5) family. Expressed in antennae and the visual system.

Its subcellular location is the membrane. In terms of biological role, approximately 50-fold more sensitive to cGMP than to cAMP. May be involved in transduction cascades of both invertebrate photoreceptors and olfactory sensillae. The protein is Cyclic nucleotide-gated cation channel subunit A (CngA) of Drosophila melanogaster (Fruit fly).